An 883-amino-acid chain; its full sequence is MAAKIGEIVQVHNDNPVKRVPIARPSFGREGKQIKLLSNHFTVKLSGIDAVFYQYSVSIKSEDDKVIDGKGIGRKVMDKVLQTYSSELAGKEFAYDGEKCLFTVGPLPQNNFEFTVILEETSSRAAGGSLGHGSPNQGDKKRSKCTHLAKKIVVGISYAAKIPLKSVALALQGSESDHAQDALRVLDIVLRQQQAKRGCLLVRQSFFSDDFRNLVDLTGGVSGCRGLHSSFRTTIGGLSLNMDVSTTMIVTPGPVFDFLLTNQNVRDIRDIDWPRAKKMLKNLRVKAIHNNMEFKIIGLSDEPCSRQTFPMKVRNGSSEGETVEITVQEYFKSKQVDLTMPYLPCLDVGKPKRPNYVPIELCHMVSLQRYTKALSSQQRATLVEKSRQKPQERMRVVTDAVKNNRYDDDPILSSCGIKIEKQLTRVDGRVLSAPTLVVGNSEDCIPNRGRWNYNNKRLFEPVKIERWAIVNFSARCDMSRISRDLINCGRTKGIIIERPFTLVDEDSQSRRCTPVVRVESMFEKVKANLPGPPEFLLCVLPERKNCDLYGPWKKKNLHEMGIITQCIVPSVKMNDQYYTNVLLKINAKLGGMNSKLSLEHRHMIPIVNQTPTLILGMDVSHGSPGRADVPSIAAVVGSRCWPLISRYRASVRTQSPKVEMIDSLFKPLDDGKDDGIIRELLLDFYKTSQQRKPKQIIIFRDGVSESQFSQVLNVELNQIIKAYQYMDQGPIPKFTVIIAQKNHHTKLFQENTPDNVPPGTVVDSGIVHPRQYDFYMYAHAGPIGTSRPTHYHVLLDEIGFLPDDVQKLVLSLSYVYQRSTTAISVVAPICYAHLAAAQMGQFMKFEEFAETSSGSGGVPSSSGAVVPELPRLHADVCSSMFFC.

The PAZ domain maps to proline 254 to serine 366. The Piwi domain occupies phenylalanine 535–lysine 844.

Belongs to the argonaute family. Ago subfamily.

In terms of biological role, probably involved in the RNA silencing pathway. May bind to short RNAs such as microRNAs (miRNAs) or short interfering RNAs (siRNAs), and represses the translation of mRNAs which are complementary to them. The protein is Protein argonaute 16 (AGO16) of Oryza sativa subsp. japonica (Rice).